The primary structure comprises 935 residues: Isoleucine--tRNA ligase (935 aa).

The short motif at 58-68 (PYANGSIHVGH) is the 'HIGH' region element. E558 contacts L-isoleucyl-5'-AMP. The short motif at 599–603 (KMSKS) is the 'KMSKS' region element. Residue K602 coordinates ATP. Zn(2+) contacts are provided by C897, C900, C917, and C920.

Belongs to the class-I aminoacyl-tRNA synthetase family. IleS type 1 subfamily. As to quaternary structure, monomer. It depends on Zn(2+) as a cofactor.

Its subcellular location is the cytoplasm. It catalyses the reaction tRNA(Ile) + L-isoleucine + ATP = L-isoleucyl-tRNA(Ile) + AMP + diphosphate. Catalyzes the attachment of isoleucine to tRNA(Ile). As IleRS can inadvertently accommodate and process structurally similar amino acids such as valine, to avoid such errors it has two additional distinct tRNA(Ile)-dependent editing activities. One activity is designated as 'pretransfer' editing and involves the hydrolysis of activated Val-AMP. The other activity is designated 'posttransfer' editing and involves deacylation of mischarged Val-tRNA(Ile). This Francisella tularensis subsp. mediasiatica (strain FSC147) protein is Isoleucine--tRNA ligase.